The chain runs to 187 residues: Elongation factor P (187 aa).

Belongs to the elongation factor P family.

The protein localises to the cytoplasm. It functions in the pathway protein biosynthesis; polypeptide chain elongation. Functionally, involved in peptide bond synthesis. Stimulates efficient translation and peptide-bond synthesis on native or reconstituted 70S ribosomes in vitro. Probably functions indirectly by altering the affinity of the ribosome for aminoacyl-tRNA, thus increasing their reactivity as acceptors for peptidyl transferase. This Bifidobacterium animalis subsp. lactis (strain AD011) protein is Elongation factor P.